The chain runs to 143 residues: Cofilin (143 aa).

The ADF-H domain occupies 5 to 137 (GVAVADESLN…AYESVLEKVS (133 aa)).

It belongs to the actin-binding proteins ADF family.

It localises to the cytoplasm. It is found in the cytoskeleton. The protein localises to the nucleus matrix. In terms of biological role, controls reversibly actin polymerization and depolymerization in a pH-sensitive manner. It has the ability to bind G- and F-actin in a 1:1 ratio of cofilin to actin. Binding to F-actin is regulated by tropomyosin. It is the major component of intranuclear and cytoplasmic actin rods. Required for accumulation of actin at the cell division site via depolymerizing actin at the cell ends. In association with myosin II has a role in the assembly of the contractile ring via severing actin filaments. Involved in the maintenance of the contractile ring once formed. In association with profilin and capping protein, has a role in the mitotic reorganization of the actin cytoskeleton. In Kluyveromyces lactis (strain ATCC 8585 / CBS 2359 / DSM 70799 / NBRC 1267 / NRRL Y-1140 / WM37) (Yeast), this protein is Cofilin (COF1).